The chain runs to 147 residues: Hemoglobin subunit gamma (147 aa).

The Globin domain occupies N3 to H147. H64 and H93 together coordinate heme b.

Belongs to the globin family. Heterotetramer of two alpha chains and two gamma chains in fetal hemoglobin (Hb F). Red blood cells.

Functionally, gamma chains make up the fetal hemoglobin F, in combination with alpha chains. The polypeptide is Hemoglobin subunit gamma (HBG) (Aotus azarae (Azara's night monkey)).